The primary structure comprises 316 residues: 4-hydroxy-3-methylbut-2-enyl diphosphate reductase (316 aa).

Cys-12 is a binding site for [4Fe-4S] cluster. His-41 and His-74 together coordinate (2E)-4-hydroxy-3-methylbut-2-enyl diphosphate. His-41 and His-74 together coordinate dimethylallyl diphosphate. His-41 and His-74 together coordinate isopentenyl diphosphate. Residue Cys-96 participates in [4Fe-4S] cluster binding. His-124 lines the (2E)-4-hydroxy-3-methylbut-2-enyl diphosphate pocket. Residue His-124 participates in dimethylallyl diphosphate binding. His-124 contacts isopentenyl diphosphate. The Proton donor role is filled by Glu-126. Position 167 (Thr-167) interacts with (2E)-4-hydroxy-3-methylbut-2-enyl diphosphate. Cys-197 lines the [4Fe-4S] cluster pocket. (2E)-4-hydroxy-3-methylbut-2-enyl diphosphate-binding residues include Ser-225, Ser-226, Asn-227, and Ser-269. Residues Ser-225, Ser-226, Asn-227, and Ser-269 each coordinate dimethylallyl diphosphate. Residues Ser-225, Ser-226, Asn-227, and Ser-269 each coordinate isopentenyl diphosphate.

Belongs to the IspH family. As to quaternary structure, homodimer. It depends on [4Fe-4S] cluster as a cofactor.

The catalysed reaction is isopentenyl diphosphate + 2 oxidized [2Fe-2S]-[ferredoxin] + H2O = (2E)-4-hydroxy-3-methylbut-2-enyl diphosphate + 2 reduced [2Fe-2S]-[ferredoxin] + 2 H(+). The enzyme catalyses dimethylallyl diphosphate + 2 oxidized [2Fe-2S]-[ferredoxin] + H2O = (2E)-4-hydroxy-3-methylbut-2-enyl diphosphate + 2 reduced [2Fe-2S]-[ferredoxin] + 2 H(+). The protein operates within isoprenoid biosynthesis; dimethylallyl diphosphate biosynthesis; dimethylallyl diphosphate from (2E)-4-hydroxy-3-methylbutenyl diphosphate: step 1/1. It functions in the pathway isoprenoid biosynthesis; isopentenyl diphosphate biosynthesis via DXP pathway; isopentenyl diphosphate from 1-deoxy-D-xylulose 5-phosphate: step 6/6. Its function is as follows. Catalyzes the conversion of 1-hydroxy-2-methyl-2-(E)-butenyl 4-diphosphate (HMBPP) into a mixture of isopentenyl diphosphate (IPP) and dimethylallyl diphosphate (DMAPP). Acts in the terminal step of the DOXP/MEP pathway for isoprenoid precursor biosynthesis. The sequence is that of 4-hydroxy-3-methylbut-2-enyl diphosphate reductase from Escherichia coli (strain ATCC 8739 / DSM 1576 / NBRC 3972 / NCIMB 8545 / WDCM 00012 / Crooks).